We begin with the raw amino-acid sequence, 138 residues long: Nucleoside diphosphate kinase (138 aa).

ATP-binding residues include K9, F57, R85, T91, R102, and N112. The Pros-phosphohistidine intermediate role is filled by H115.

Belongs to the NDK family. Homotetramer. Requires Mg(2+) as cofactor.

It is found in the cytoplasm. The catalysed reaction is a 2'-deoxyribonucleoside 5'-diphosphate + ATP = a 2'-deoxyribonucleoside 5'-triphosphate + ADP. It carries out the reaction a ribonucleoside 5'-diphosphate + ATP = a ribonucleoside 5'-triphosphate + ADP. Its function is as follows. Major role in the synthesis of nucleoside triphosphates other than ATP. The ATP gamma phosphate is transferred to the NDP beta phosphate via a ping-pong mechanism, using a phosphorylated active-site intermediate. This is Nucleoside diphosphate kinase from Deinococcus deserti (strain DSM 17065 / CIP 109153 / LMG 22923 / VCD115).